A 151-amino-acid polypeptide reads, in one-letter code: Ribosome maturation factor RimP (151 aa).

The protein belongs to the RimP family.

It localises to the cytoplasm. In terms of biological role, required for maturation of 30S ribosomal subunits. This chain is Ribosome maturation factor RimP, found in Shewanella sp. (strain ANA-3).